A 217-amino-acid chain; its full sequence is GTP-binding protein Rit2 (217 aa).

GTP-binding positions include 27–34 (GAGGVGKS), 74–78 (DTAGQ), and 133–136 (NKID).

Belongs to the small GTPase superfamily. Ras family. As to quaternary structure, interacts with AFDN, the C-terminal domain of RALGDS and RLF, but not with RIN1 and PIK3CA. RLF binds exclusively to the active GTP-bound form. Binds calmodulin. Interacts with PLXNB3.

It is found in the nucleus. The protein resides in the cell membrane. It catalyses the reaction GTP + H2O = GDP + phosphate + H(+). Its activity is regulated as follows. Alternates between an inactive form bound to GDP and an active form bound to GTP. Its function is as follows. Binds and exchanges GTP and GDP. This is GTP-binding protein Rit2 (Rit2) from Rattus norvegicus (Rat).